The chain runs to 136 residues: Nucleoside diphosphate kinase (136 aa).

ATP contacts are provided by Lys-10, Phe-58, Arg-86, Thr-92, Arg-104, and Asn-114. Residue His-117 is the Pros-phosphohistidine intermediate of the active site.

It belongs to the NDK family. Homotetramer. Requires Mg(2+) as cofactor.

It is found in the cytoplasm. The enzyme catalyses a 2'-deoxyribonucleoside 5'-diphosphate + ATP = a 2'-deoxyribonucleoside 5'-triphosphate + ADP. The catalysed reaction is a ribonucleoside 5'-diphosphate + ATP = a ribonucleoside 5'-triphosphate + ADP. Major role in the synthesis of nucleoside triphosphates other than ATP. The ATP gamma phosphate is transferred to the NDP beta phosphate via a ping-pong mechanism, using a phosphorylated active-site intermediate. The polypeptide is Nucleoside diphosphate kinase (Mycobacterium marinum (strain ATCC BAA-535 / M)).